Here is an 83-residue protein sequence, read N- to C-terminus: RNA-binding protein Hfq (83 aa).

Positions Asp11–Ile71 constitute a Sm domain.

It belongs to the Hfq family. Homohexamer.

In terms of biological role, RNA chaperone that binds small regulatory RNA (sRNAs) and mRNAs to facilitate mRNA translational regulation in response to envelope stress, environmental stress and changes in metabolite concentrations. Also binds with high specificity to tRNAs. This is RNA-binding protein Hfq from Methylocella silvestris (strain DSM 15510 / CIP 108128 / LMG 27833 / NCIMB 13906 / BL2).